Reading from the N-terminus, the 347-residue chain is 5-formaminoimidazole-4-carboxamide-1-(beta)-D-ribofuranosyl 5'-monophosphate synthetase (347 aa).

5-amino-1-(5-phospho-beta-D-ribosyl)imidazole-4-carboxamide is bound by residues H23 and S91. Positions 112–323 (RKILLWESDQ…YSYLYWDEPM (212 aa)) constitute an ATP-grasp domain. ATP is bound by residues 142 to 196 (PDEV…VPAY) and E218. A 5-amino-1-(5-phospho-beta-D-ribosyl)imidazole-4-carboxamide-binding site is contributed by N244. Mg(2+) is bound by residues E283 and E296.

Belongs to the phosphohexose mutase family. Requires Mg(2+) as cofactor. Mn(2+) serves as cofactor.

The catalysed reaction is 5-amino-1-(5-phospho-beta-D-ribosyl)imidazole-4-carboxamide + formate + ATP = 5-formamido-1-(5-phospho-D-ribosyl)imidazole-4-carboxamide + ADP + phosphate. It functions in the pathway purine metabolism; IMP biosynthesis via de novo pathway; 5-formamido-1-(5-phospho-D-ribosyl)imidazole-4-carboxamide from 5-amino-1-(5-phospho-D-ribosyl)imidazole-4-carboxamide (formate route): step 1/1. Catalyzes the ATP- and formate-dependent formylation of 5-aminoimidazole-4-carboxamide-1-beta-d-ribofuranosyl 5'-monophosphate (AICAR) to 5-formaminoimidazole-4-carboxamide-1-beta-d-ribofuranosyl 5'-monophosphate (FAICAR) in the absence of folates. In Ignicoccus hospitalis (strain KIN4/I / DSM 18386 / JCM 14125), this protein is 5-formaminoimidazole-4-carboxamide-1-(beta)-D-ribofuranosyl 5'-monophosphate synthetase.